The sequence spans 263 residues: Small ribosomal subunit protein uS2 (263 aa).

Residues Lys223–Ala246 are disordered. The segment covering Gln228–Ser240 has biased composition (acidic residues).

It belongs to the universal ribosomal protein uS2 family.

The sequence is that of Small ribosomal subunit protein uS2 from Campylobacter curvus (strain 525.92).